Consider the following 727-residue polypeptide: Anaphase-promoting complex subunit 5 (727 aa).

At S180 the chain carries Phosphoserine. TPR repeat units follow at residues Q194–D234, F235–L285, R286–H322, V323–P359, R360–I390, D391–F438, A439–N472, S473–G512, I513–V552, I553–A592, S593–K632, G633–E668, and A669–V708. T217 is modified (phosphothreonine).

It belongs to the APC5 family. As to quaternary structure, the mammalian APC/C is composed at least of 14 distinct subunits ANAPC1, ANAPC2, CDC27/APC3, ANAPC4, ANAPC5, CDC16/APC6, ANAPC7, CDC23/APC8, ANAPC10, ANAPC11, CDC26/APC12, ANAPC13, ANAPC15 and ANAPC16 that assemble into a complex of at least 19 chains with a combined molecular mass of around 1.2 MDa; APC/C interacts with FZR1 and FBXO5.

It is found in the nucleus. It localises to the cytoplasm. Its subcellular location is the cytoskeleton. The protein resides in the spindle. The protein operates within protein modification; protein ubiquitination. Its function is as follows. Component of the anaphase promoting complex/cyclosome (APC/C), a cell cycle-regulated E3 ubiquitin ligase that controls progression through mitosis and the G1 phase of the cell cycle. The APC/C complex acts by mediating ubiquitination and subsequent degradation of target proteins: it mainly mediates the formation of 'Lys-11'-linked polyubiquitin chains and, to a lower extent, the formation of 'Lys-48'- and 'Lys-63'-linked polyubiquitin chains. The APC/C complex catalyzes assembly of branched 'Lys-11'-/'Lys-48'-linked branched ubiquitin chains on target proteins. The chain is Anaphase-promoting complex subunit 5 (Anapc5) from Rattus norvegicus (Rat).